The primary structure comprises 389 residues: Xylose isomerase (389 aa).

Active-site residues include H54 and D57. Residues E181, E217, H220, D245, D255, D257, and D287 each coordinate Mg(2+).

Belongs to the xylose isomerase family. Homotetramer. Mg(2+) is required as a cofactor.

The protein resides in the cytoplasm. The enzyme catalyses alpha-D-xylose = alpha-D-xylulofuranose. Its function is as follows. Involved in D-xylose catabolism. The chain is Xylose isomerase (xylA) from Streptomyces violaceusniger.